A 259-amino-acid polypeptide reads, in one-letter code: DNA terminal protein (259 aa).

The residue at position 190 (Y190) is an O-(5'-phospho-DNA)-tyrosine. Positions 243-259 match the Nuclear localization signal motif; the sequence is KKKYKRRQKRGYGSKGV.

The protein belongs to the tectivirus DNA terminal protein family. In terms of assembly, heterodimer with viral polymerase. Binds to ssDNA.

The protein localises to the virion. It is found in the host nucleus. Functionally, acts as a primer for viral genomic replication. DNA terminal protein is covalently linked to the 5'-ends of both strands of the genome through a phosphodiester bond between the beta-hydroxyl group of a tyrosine residue and the 5'-phosphate of the terminal deoxyadenylate. This protein is essential for DNA replication and is involved in the priming of DNA elongation. This chain is DNA terminal protein (VIII), found in Enterobacteria phage PRD1 (Bacteriophage PRD1).